The following is a 1146-amino-acid chain: Killer toxin subunits alpha/beta (1146 aa).

The N-terminal stretch at 1–17 (MNIFYIFLFLLSFVQGL) is a signal peptide. The propeptide occupies 18–29 (EHTHRRGSLVKR). 2 LysM domains span residues 205–234 (ADQS…QPIC) and 254–303 (KTYK…NLCV). The 57-residue stretch at 316 to 372 (IAECGPLAPGEKYNAKCPLNACCSEFGFCGLTKDYCDKKSSTTGAPGTDGCFSNCGY) folds into the Chitin-binding type-1 domain. 4 cysteine pairs are disulfide-bonded: Cys-319-Cys-338, Cys-332-Cys-344, Cys-337-Cys-351, and Cys-366-Cys-370. The 353-residue stretch at 383–735 (FKKIAYWLDA…DDTEDPFDEE (353 aa)) folds into the GH18 domain. Chitin is bound by residues Ile-424 and 447-450 (GGWD). The active-site Proton donor is Glu-495. Chitin-binding positions include Tyr-496, 562 to 565 (MTYD), and Trp-707. Residues Asn-771, Asn-858, Asn-868, Asn-876, and Asn-1117 are each glycosylated (N-linked (GlcNAc...) asparagine).

Belongs to the glycosyl hydrolase 18 family. The killer toxin is composed of three subunits: alpha, beta and gamma. In terms of processing, RF2 is potentially split by membrane-bound basic amino acid-specific peptidase to yield the alpha and beta subunits.

The enzyme catalyses Random endo-hydrolysis of N-acetyl-beta-D-glucosaminide (1-&gt;4)-beta-linkages in chitin and chitodextrins.. Functionally, the alpha subunit is a potent exochitinase. Along with the beta subunit it plays a role in the initial interaction of the toxin with sensitive cells and allow the gamma subunit (the active toxin) to gain entry into the cell. The polypeptide is Killer toxin subunits alpha/beta (Kluyveromyces lactis (strain ATCC 8585 / CBS 2359 / DSM 70799 / NBRC 1267 / NRRL Y-1140 / WM37) (Yeast)).